The primary structure comprises 405 residues: S-adenosylmethionine sensor upstream of mTORC1 (405 aa).

The disordered stretch occupies residues 1–34 (MEPGAGGRNTARAQRAGSPNTPPPREQERKLEQE). Residues 25 to 34 (REQERKLEQE) are compositionally biased toward basic and acidic residues. Positions 95, 172, 190, 202, 203, and 244 each coordinate S-adenosyl-L-methionine.

Belongs to the BMT2/SAMTOR family. In terms of assembly, interacts with the DEPDC5 subunit of the GATOR1 complex; interaction is disrupted when SAMTOR binds S-adenosyl-L-methionine. Interacts with the KICSTOR complex; interaction is disrupted when SAMTOR binds S-adenosyl-L-methionine.

S-adenosyl-L-methionine-binding protein that acts as an inhibitor of mTORC1 signaling via interaction with the GATOR1 and KICSTOR complexes. Acts as a sensor of S-adenosyl-L-methionine to signal methionine sufficiency to mTORC1: in presence of methionine, binds S-adenosyl-L-methionine, leading to disrupt interaction with the GATOR1 and KICSTOR complexes and promote mTORC1 signaling. Upon methionine starvation, S-adenosyl-L-methionine levels are reduced, thereby promoting the association with GATOR1 and KICSTOR, leading to inhibit mTORC1 signaling. Probably also acts as a S-adenosyl-L-methionine-dependent methyltransferase (Potential). In Homo sapiens (Human), this protein is S-adenosylmethionine sensor upstream of mTORC1.